The following is a 161-amino-acid chain: SsrA-binding protein (161 aa).

This sequence belongs to the SmpB family.

Its subcellular location is the cytoplasm. Required for rescue of stalled ribosomes mediated by trans-translation. Binds to transfer-messenger RNA (tmRNA), required for stable association of tmRNA with ribosomes. tmRNA and SmpB together mimic tRNA shape, replacing the anticodon stem-loop with SmpB. tmRNA is encoded by the ssrA gene; the 2 termini fold to resemble tRNA(Ala) and it encodes a 'tag peptide', a short internal open reading frame. During trans-translation Ala-aminoacylated tmRNA acts like a tRNA, entering the A-site of stalled ribosomes, displacing the stalled mRNA. The ribosome then switches to translate the ORF on the tmRNA; the nascent peptide is terminated with the 'tag peptide' encoded by the tmRNA and targeted for degradation. The ribosome is freed to recommence translation, which seems to be the essential function of trans-translation. This chain is SsrA-binding protein, found in Vibrio vulnificus (strain YJ016).